The primary structure comprises 578 residues: ER degradation-enhancing alpha-mannosidase-like protein 2 (578 aa).

The signal sequence occupies residues 1–21 (MPFRLLIPLGLLCALLPQHHG). Asn-90, Asn-112, Asn-289, and Asn-450 each carry an N-linked (GlcNAc...) asparagine glycan. Positions 517–557 (KNTVSSGPWEPPARPGTLFSPENHDQARERKPAKQKVPLLS) are disordered. The segment covering 538–548 (ENHDQARERKP) has biased composition (basic and acidic residues).

This sequence belongs to the glycosyl hydrolase 47 family. Post-translationally, N-glycosylated. As to expression, expressed ubiquitously in all tissues tested with slightly higher levels detected in small intestine and peripheral blood leukocytes and weakest levels in brain and skeletal muscle.

Its subcellular location is the endoplasmic reticulum lumen. Its function is as follows. Involved in the endoplasmic reticulum-associated degradation (ERAD) pathway that targets misfolded glycoproteins for degradation in an N-glycan-dependent manner. May initiate ERAD by promoting the first mannose trimming step of ERAD substrates, from Man9GlcNAc2 to Man8GlcNAc2. Seems to recognize and bind to exposed hydrophobic regions in target proteins. This Homo sapiens (Human) protein is ER degradation-enhancing alpha-mannosidase-like protein 2 (EDEM2).